Here is a 142-residue protein sequence, read N- to C-terminus: Transcription antitermination protein NusB (142 aa).

It belongs to the NusB family.

Its function is as follows. Involved in transcription antitermination. Required for transcription of ribosomal RNA (rRNA) genes. Binds specifically to the boxA antiterminator sequence of the ribosomal RNA (rrn) operons. This is Transcription antitermination protein NusB from Buchnera aphidicola subsp. Cinara cedri (strain Cc).